We begin with the raw amino-acid sequence, 226 residues long: uncharacterized protein (226 aa).

It to L.innocua lin2408 and lin2600.

This is an uncharacterized protein from Listeria innocua serovar 6a (strain ATCC BAA-680 / CLIP 11262).